Here is a 390-residue protein sequence, read N- to C-terminus: Heparan sulfate glucosamine 3-O-sulfotransferase 3B1 (390 aa).

The tract at residues 1–25 (MGQRLSGGRSCLDVPGRLLPQPPPP) is disordered. The Cytoplasmic segment spans residues 1–32 (MGQRLSGGRSCLDVPGRLLPQPPPPPPPVRRK). Residues 33-53 (LALLFAMLCVWLYMFLYSCAG) form a helical; Signal-anchor for type II membrane protein membrane-spanning segment. Over 54 to 390 (SCAAAPGLLL…QMTGHDFGWD (337 aa)) the chain is Lumenal. The tract at residues 74–133 (PPALATAPDGTPPRLPFRAPPATPLASGKEMAEGAASPEEQSPEVPDSPSPISSFFSGSG) is disordered. The segment covering 83 to 96 (GTPPRLPFRAPPAT) has biased composition (pro residues). Residues 123–133 (SPISSFFSGSG) show a composition bias toward low complexity. Residue 147 to 151 (KGGTR) participates in 3'-phosphoadenylyl sulfate binding. Substrate-binding positions include 169-175 (EPHFFDR) and 200-203 (KTPS). 3'-phosphoadenylyl sulfate-binding residues include Arg228 and Ser236. N-linked (GlcNAc...) asparagine glycosylation is present at Asn258. Residue 268–269 (WS) participates in substrate binding. N-linked (GlcNAc...) asparagine glycosylation occurs at Asn329. A disulfide bond links Cys336 and Cys348. 353 to 357 (KGRTH) is a binding site for 3'-phosphoadenylyl sulfate.

This sequence belongs to the sulfotransferase 1 family. Ubiquitous. Most abundant in liver and placenta, followed by heart and kidney.

It is found in the golgi apparatus membrane. The enzyme catalyses alpha-D-glucosaminyl-[heparan sulfate](n) + 3'-phosphoadenylyl sulfate = 3-sulfo-alpha-D-glucosaminyl-[heparan sulfate](n) + adenosine 3',5'-bisphosphate + H(+). Functionally, sulfotransferase that utilizes 3'-phospho-5'-adenylyl sulfate (PAPS) to catalyze the transfer of a sulfo group to an N-unsubstituted glucosamine linked to a 2-O-sulfo iduronic acid unit on heparan sulfate. Catalyzes the O-sulfation of glucosamine in IdoUA2S-GlcNS and also in IdoUA2S-GlcNH2. The substrate-specific O-sulfation generates an enzyme-modified heparan sulfate which acts as a binding receptor to Herpes simplex virus-1 (HSV-1) and permits its entry. Unlike HS3ST1/3-OST-1, does not convert non-anticoagulant heparan sulfate to anticoagulant heparan sulfate. In Homo sapiens (Human), this protein is Heparan sulfate glucosamine 3-O-sulfotransferase 3B1 (HS3ST3B1).